A 553-amino-acid chain; its full sequence is Formate--tetrahydrofolate ligase (553 aa).

62-69 (TPAGEGKS) provides a ligand contact to ATP.

This sequence belongs to the formate--tetrahydrofolate ligase family.

The enzyme catalyses (6S)-5,6,7,8-tetrahydrofolate + formate + ATP = (6R)-10-formyltetrahydrofolate + ADP + phosphate. The protein operates within one-carbon metabolism; tetrahydrofolate interconversion. This Pediococcus pentosaceus (strain ATCC 25745 / CCUG 21536 / LMG 10740 / 183-1w) protein is Formate--tetrahydrofolate ligase.